The sequence spans 475 residues: Sulfate adenylyltransferase subunit 1 (475 aa).

Residues 25–239 form the tr-type G domain; sequence KSLLRFLTCG…EVLETVEIQR (215 aa). The G1 stretch occupies residues 34–41; the sequence is GSVDDGKS. Position 34–41 (34–41) interacts with GTP; it reads GSVDDGKS. A G2 region spans residues 92-96; sequence GITID. The interval 113–116 is G3; the sequence is DTPG. GTP-binding positions include 113–117 and 168–171; these read DTPGH and NKMD. The tract at residues 168-171 is G4; it reads NKMD. Positions 206-208 are G5; it reads SAL.

Belongs to the TRAFAC class translation factor GTPase superfamily. Classic translation factor GTPase family. CysN/NodQ subfamily. Heterodimer composed of CysD, the smaller subunit, and CysN.

It catalyses the reaction sulfate + ATP + H(+) = adenosine 5'-phosphosulfate + diphosphate. Its pathway is sulfur metabolism; hydrogen sulfide biosynthesis; sulfite from sulfate: step 1/3. Functionally, with CysD forms the ATP sulfurylase (ATPS) that catalyzes the adenylation of sulfate producing adenosine 5'-phosphosulfate (APS) and diphosphate, the first enzymatic step in sulfur assimilation pathway. APS synthesis involves the formation of a high-energy phosphoric-sulfuric acid anhydride bond driven by GTP hydrolysis by CysN coupled to ATP hydrolysis by CysD. This Escherichia coli (strain SE11) protein is Sulfate adenylyltransferase subunit 1.